The primary structure comprises 84 residues: Small ribosomal subunit protein uS17 (84 aa).

This sequence belongs to the universal ribosomal protein uS17 family. In terms of assembly, part of the 30S ribosomal subunit.

In terms of biological role, one of the primary rRNA binding proteins, it binds specifically to the 5'-end of 16S ribosomal RNA. The sequence is that of Small ribosomal subunit protein uS17 from Borrelia hermsii (strain HS1 / DAH).